Reading from the N-terminus, the 696-residue chain is Polyribonucleotide nucleotidyltransferase (696 aa).

Residues Asp489 and Asp495 each contribute to the Mg(2+) site. In terms of domain architecture, KH spans 556 to 615; the sequence is PQYVTMKINPEKIRDVIGKGGVVIREITEATNCAIDISDDGTIKIAAHTTEEGEAAKRRI. Positions 625–693 constitute an S1 motif domain; it reads GKVYEGTVVK…RQGRVRLSMK (69 aa).

Belongs to the polyribonucleotide nucleotidyltransferase family. As to quaternary structure, component of the RNA degradosome, which is a multiprotein complex involved in RNA processing and mRNA degradation. Mg(2+) is required as a cofactor.

The protein localises to the cytoplasm. The catalysed reaction is RNA(n+1) + phosphate = RNA(n) + a ribonucleoside 5'-diphosphate. Functionally, involved in mRNA degradation. Catalyzes the phosphorolysis of single-stranded polyribonucleotides processively in the 3'- to 5'-direction. The sequence is that of Polyribonucleotide nucleotidyltransferase from Coxiella burnetii (strain RSA 331 / Henzerling II).